A 20-amino-acid polypeptide reads, in one-letter code: Putative 60 kDa spermidine-binding protein (20 aa).

The disordered stretch occupies residues 1-20 (SXAAVVEPPETSQNRIAKGE). Positions 10–20 (ETSQNRIAKGE) are enriched in polar residues.

In terms of assembly, dimer of 18 kDa and 60 kDa subunit.

It is found in the microsome membrane. The protein resides in the endoplasmic reticulum membrane. In terms of biological role, may have spermidine-binding activity. The protein is Putative 60 kDa spermidine-binding protein of Zea mays (Maize).